The following is a 284-amino-acid chain: Avenin-like b10 (284 aa).

Positions 1–18 are cleaved as a signal peptide; that stretch reads MKVFILALLALAATTAIA.

It belongs to the prolamin family. In terms of processing, contains disulfide bonds.

Functionally, seed storage protein. Might be integrated via inter-chain disulfide bonds within the glutenin polymer. This chain is Avenin-like b10, found in Triticum aestivum (Wheat).